The following is a 159-amino-acid chain: Ribosomal RNA large subunit methyltransferase H (159 aa).

Residues leucine 76, glycine 108, and 127 to 132 (FSKMTF) contribute to the S-adenosyl-L-methionine site.

The protein belongs to the RNA methyltransferase RlmH family. As to quaternary structure, homodimer.

The protein localises to the cytoplasm. The catalysed reaction is pseudouridine(1915) in 23S rRNA + S-adenosyl-L-methionine = N(3)-methylpseudouridine(1915) in 23S rRNA + S-adenosyl-L-homocysteine + H(+). Specifically methylates the pseudouridine at position 1915 (m3Psi1915) in 23S rRNA. The chain is Ribosomal RNA large subunit methyltransferase H from Clostridium tetani (strain Massachusetts / E88).